Here is a 158-residue protein sequence, read N- to C-terminus: NAD(P)H-quinone oxidoreductase subunit J, chloroplastic (158 aa).

The protein belongs to the complex I 30 kDa subunit family. NDH is composed of at least 16 different subunits, 5 of which are encoded in the nucleus.

Its subcellular location is the plastid. It is found in the chloroplast thylakoid membrane. The catalysed reaction is a plastoquinone + NADH + (n+1) H(+)(in) = a plastoquinol + NAD(+) + n H(+)(out). It carries out the reaction a plastoquinone + NADPH + (n+1) H(+)(in) = a plastoquinol + NADP(+) + n H(+)(out). Its function is as follows. NDH shuttles electrons from NAD(P)H:plastoquinone, via FMN and iron-sulfur (Fe-S) centers, to quinones in the photosynthetic chain and possibly in a chloroplast respiratory chain. The immediate electron acceptor for the enzyme in this species is believed to be plastoquinone. Couples the redox reaction to proton translocation, and thus conserves the redox energy in a proton gradient. The protein is NAD(P)H-quinone oxidoreductase subunit J, chloroplastic of Illicium oligandrum (Star anise).